We begin with the raw amino-acid sequence, 37 residues long: Photosystem I reaction center subunit IX (37 aa).

Residues 4–24 (FLTTAPVVAAIWFTLTAGILI) form a helical membrane-spanning segment.

It belongs to the PsaJ family.

It localises to the cellular thylakoid membrane. In terms of biological role, may help in the organization of the PsaE and PsaF subunits. This is Photosystem I reaction center subunit IX from Synechococcus sp. (strain WH7803).